The primary structure comprises 831 residues: Molybdenum cofactor sulfurase (831 aa).

Lys262 bears the N6-(pyridoxal phosphate)lysine mark. Cys422 is an active-site residue. The MOSC domain maps to 651–823; sequence AWLSEFLGKP…LSIGSHVIPK (173 aa).

It belongs to the class-V pyridoxal-phosphate-dependent aminotransferase family. MOCOS subfamily. Pyridoxal 5'-phosphate is required as a cofactor.

The enzyme catalyses Mo-molybdopterin + L-cysteine + AH2 = thio-Mo-molybdopterin + L-alanine + A + H2O. Its pathway is cofactor biosynthesis; molybdopterin biosynthesis. Its function is as follows. Sulfurates the molybdenum cofactor. Sulfation of molybdenum is essential for xanthine dehydrogenase (XDH) and aldehyde oxidase (ADO) enzymes in which molybdenum cofactor is liganded by 1 oxygen and 1 sulfur atom in active form. The chain is Molybdenum cofactor sulfurase (mocos) from Danio rerio (Zebrafish).